The chain runs to 508 residues: Photosystem II CP47 reaction center protein (508 aa).

Transmembrane regions (helical) follow at residues 21–36 (SVHL…WAGS), 101–115 (IVLS…IWHW), 140–156 (GIHL…FGAF), 203–218 (IAAG…FHLT), 237–252 (VLSS…AFVV), and 457–472 (CFAL…HGAR).

It belongs to the PsbB/PsbC family. PsbB subfamily. In terms of assembly, PSII is composed of 1 copy each of membrane proteins PsbA, PsbB, PsbC, PsbD, PsbE, PsbF, PsbH, PsbI, PsbJ, PsbK, PsbL, PsbM, PsbT, PsbX, PsbY, PsbZ, Psb30/Ycf12, at least 3 peripheral proteins of the oxygen-evolving complex and a large number of cofactors. It forms dimeric complexes. Binds multiple chlorophylls. PSII binds additional chlorophylls, carotenoids and specific lipids. is required as a cofactor.

The protein resides in the plastid. It is found in the chloroplast thylakoid membrane. In terms of biological role, one of the components of the core complex of photosystem II (PSII). It binds chlorophyll and helps catalyze the primary light-induced photochemical processes of PSII. PSII is a light-driven water:plastoquinone oxidoreductase, using light energy to abstract electrons from H(2)O, generating O(2) and a proton gradient subsequently used for ATP formation. The chain is Photosystem II CP47 reaction center protein from Chlorokybus atmophyticus (Soil alga).